The following is a 344-amino-acid chain: Phenylalanine--tRNA ligase alpha subunit (344 aa).

Glu256 lines the Mg(2+) pocket.

This sequence belongs to the class-II aminoacyl-tRNA synthetase family. Phe-tRNA synthetase alpha subunit type 1 subfamily. As to quaternary structure, tetramer of two alpha and two beta subunits. Mg(2+) is required as a cofactor.

The protein resides in the cytoplasm. The catalysed reaction is tRNA(Phe) + L-phenylalanine + ATP = L-phenylalanyl-tRNA(Phe) + AMP + diphosphate + H(+). The sequence is that of Phenylalanine--tRNA ligase alpha subunit from Bacillus mycoides (strain KBAB4) (Bacillus weihenstephanensis).